The primary structure comprises 362 residues: Oxysterol-binding protein 5 (362 aa).

Belongs to the OSBP family.

The sequence is that of Oxysterol-binding protein 5 (osbE) from Dictyostelium discoideum (Social amoeba).